The following is an 83-amino-acid chain: U5-theraphotoxin-Hs1a 4 (83 aa).

An N-terminal signal peptide occupies residues 1–21 (MKTSMFLTLTGLVLLFVDCYA). A propeptide spanning residues 22-49 (SESEEKEFPKELLSSIFAADSDFKVEER) is cleaved from the precursor. Disulfide bonds link cysteine 51–cysteine 63, cysteine 56–cysteine 68, and cysteine 62–cysteine 75.

It belongs to the neurotoxin 10 (Hwtx-1) family. 51 (Hntx-8) subfamily. Hntx-8 sub-subfamily. In terms of tissue distribution, expressed by the venom gland.

It is found in the secreted. Its function is as follows. Agglutinates erythrocytes. The chain is U5-theraphotoxin-Hs1a 4 from Cyriopagopus schmidti (Chinese bird spider).